A 366-amino-acid polypeptide reads, in one-letter code: NADH-quinone oxidoreductase subunit D (366 aa).

This sequence belongs to the complex I 49 kDa subunit family. In terms of assembly, NDH-1 is composed of 14 different subunits. Subunits NuoB, C, D, E, F, and G constitute the peripheral sector of the complex.

The protein localises to the cell membrane. It catalyses the reaction a quinone + NADH + 5 H(+)(in) = a quinol + NAD(+) + 4 H(+)(out). In terms of biological role, NDH-1 shuttles electrons from NADH, via FMN and iron-sulfur (Fe-S) centers, to quinones in the respiratory chain. The immediate electron acceptor for the enzyme in this species is believed to be a menaquinone. Couples the redox reaction to proton translocation (for every two electrons transferred, four hydrogen ions are translocated across the cytoplasmic membrane), and thus conserves the redox energy in a proton gradient. In Bacillus mycoides (strain KBAB4) (Bacillus weihenstephanensis), this protein is NADH-quinone oxidoreductase subunit D.